The following is a 147-amino-acid chain: Ubiquitin-conjugating enzyme E2-17 kDa (147 aa).

The UBC core domain occupies 1 to 147 (MALKRINKEL…AREWTRKYAM (147 aa)). Cysteine 85 (glycyl thioester intermediate) is an active-site residue.

It belongs to the ubiquitin-conjugating enzyme family.

It catalyses the reaction S-ubiquitinyl-[E1 ubiquitin-activating enzyme]-L-cysteine + [E2 ubiquitin-conjugating enzyme]-L-cysteine = [E1 ubiquitin-activating enzyme]-L-cysteine + S-ubiquitinyl-[E2 ubiquitin-conjugating enzyme]-L-cysteine.. It participates in protein modification; protein ubiquitination. In terms of biological role, catalyzes the covalent attachment of ubiquitin to other proteins. Mediates the selective degradation of short-lived and abnormal proteins. Required for proper telomere behavior during cell divisions and possibly for ubiquitination of proteins involved in postmeiotic stages of spermatogenesis. Deletion mutations are lethal in homozygotes. In Drosophila melanogaster (Fruit fly), this protein is Ubiquitin-conjugating enzyme E2-17 kDa (eff).